The following is a 239-amino-acid chain: Purine nucleoside phosphorylase DeoD-type (239 aa).

Histidine 5 is a binding site for a purine D-ribonucleoside. Residues glycine 21, arginine 25, arginine 44, and 88 to 91 contribute to the phosphate site; that span reads RVGS. A purine D-ribonucleoside-binding positions include 180 to 182 and 204 to 205; these read EME and SD. The active-site Proton donor is the aspartate 205.

The protein belongs to the PNP/UDP phosphorylase family. In terms of assembly, homohexamer; trimer of homodimers.

It carries out the reaction a purine D-ribonucleoside + phosphate = a purine nucleobase + alpha-D-ribose 1-phosphate. It catalyses the reaction a purine 2'-deoxy-D-ribonucleoside + phosphate = a purine nucleobase + 2-deoxy-alpha-D-ribose 1-phosphate. In terms of biological role, catalyzes the reversible phosphorolytic breakdown of the N-glycosidic bond in the beta-(deoxy)ribonucleoside molecules, with the formation of the corresponding free purine bases and pentose-1-phosphate. The chain is Purine nucleoside phosphorylase DeoD-type from Klebsiella pneumoniae (strain 342).